We begin with the raw amino-acid sequence, 248 residues long: Isoprenyl transferase (248 aa).

The active site involves aspartate 23. Residue aspartate 23 participates in Mg(2+) binding. Substrate contacts are provided by residues 24–27 (GNGR), tryptophan 28, arginine 36, histidine 40, and 68–70 (STE). Asparagine 71 serves as the catalytic Proton acceptor. Residues tryptophan 72, arginine 74, arginine 185, and 191–193 (RIS) each bind substrate. Position 204 (glutamate 204) interacts with Mg(2+).

This sequence belongs to the UPP synthase family. As to quaternary structure, homodimer. It depends on Mg(2+) as a cofactor.

Its function is as follows. Catalyzes the condensation of isopentenyl diphosphate (IPP) with allylic pyrophosphates generating different type of terpenoids. This Neisseria meningitidis serogroup B (strain ATCC BAA-335 / MC58) protein is Isoprenyl transferase.